The following is a 106-amino-acid chain: Phosphoribosyl-ATP pyrophosphatase 1 (106 aa).

This sequence belongs to the PRA-PH family.

Its subcellular location is the cytoplasm. It catalyses the reaction 1-(5-phospho-beta-D-ribosyl)-ATP + H2O = 1-(5-phospho-beta-D-ribosyl)-5'-AMP + diphosphate + H(+). It functions in the pathway amino-acid biosynthesis; L-histidine biosynthesis; L-histidine from 5-phospho-alpha-D-ribose 1-diphosphate: step 2/9. In Bradyrhizobium diazoefficiens (strain JCM 10833 / BCRC 13528 / IAM 13628 / NBRC 14792 / USDA 110), this protein is Phosphoribosyl-ATP pyrophosphatase 1 (hisE1).